The chain runs to 266 residues: Undecaprenyl-diphosphatase (266 aa).

Transmembrane regions (helical) follow at residues 1 to 21 (MDTFQVIILALIQGLTEFLPI), 39 to 59 (QGLSFDVAVNTGSLFAVVIYF), 87 to 107 (WWIILATLPAVFFGFIAKDFI), 111 to 131 (LRSAGVIAVTTIVFGLLLWWA), 149 to 169 (ALLIGFAQALALIPGTSRSGA), 183 to 203 (AAARFSFLMSVPVSLGAAILV), 218 to 238 (ALTLGTVISFVAAYLCIHYFL), and 246 to 266 (MTPFVIYRLILGAVLCGFIFL).

This sequence belongs to the UppP family.

The protein localises to the cell inner membrane. The catalysed reaction is di-trans,octa-cis-undecaprenyl diphosphate + H2O = di-trans,octa-cis-undecaprenyl phosphate + phosphate + H(+). Functionally, catalyzes the dephosphorylation of undecaprenyl diphosphate (UPP). Confers resistance to bacitracin. This Shewanella sp. (strain MR-4) protein is Undecaprenyl-diphosphatase.